Here is a 194-residue protein sequence, read N- to C-terminus: Glycerol-3-phosphate acyltransferase (194 aa).

6 helical membrane passes run 3–23, 52–72, 80–100, 112–132, 135–155, and 162–182; these read AGLF…GLLL, VGIL…LLAW, MQAW…FLLF, VFLA…ILLV, WRYI…IIFF, and LLIA…SNIS.

It belongs to the PlsY family. Probably interacts with PlsX.

The protein localises to the cell inner membrane. The enzyme catalyses an acyl phosphate + sn-glycerol 3-phosphate = a 1-acyl-sn-glycero-3-phosphate + phosphate. It functions in the pathway lipid metabolism; phospholipid metabolism. In terms of biological role, catalyzes the transfer of an acyl group from acyl-phosphate (acyl-PO(4)) to glycerol-3-phosphate (G3P) to form lysophosphatidic acid (LPA). This enzyme utilizes acyl-phosphate as fatty acyl donor, but not acyl-CoA or acyl-ACP. The chain is Glycerol-3-phosphate acyltransferase from Trichlorobacter lovleyi (strain ATCC BAA-1151 / DSM 17278 / SZ) (Geobacter lovleyi).